The sequence spans 774 residues: Formin-like protein 13 (774 aa).

A signal peptide spans 1-22 (MRRRVALSTAIALLVGAQLCVA). Positions 51–67 (PPPPMSGSEAVPPPPPA) are enriched in pro residues. A disordered region spans residues 51–78 (PPPPMSGSEAVPPPPPAAAASATTGGGR). Residues 68–78 (AAASATTGGGR) are compositionally biased toward low complexity. A helical membrane pass occupies residues 89 to 109 (IALSAGLVALAVASYSCCLLL). Disordered stretches follow at residues 130 to 163 (AAAA…DAIY), 176 to 338 (HEKS…HLKP), 374 to 402 (FLNS…RRLL), and 740 to 774 (GSGK…SSSS). Residues 194 to 216 (DLRPLPPLKRPESQPPPPPPSTP) are compositionally biased toward pro residues. A compositionally biased stretch (low complexity) spans 242–261 (SSFSRSTSQHSTLEQTAMPP). Over residues 262–286 (MAAPAPPQTNPPRPVRPPPPPPPPR) the composition is skewed to pro residues. The FH2 domain occupies 326–749 (GAARPPKPPH…GSGKSFRVPA (424 aa)).

This sequence belongs to the formin-like family. Class-I subfamily.

It localises to the membrane. The protein is Formin-like protein 13 (FH13) of Oryza sativa subsp. japonica (Rice).